The following is a 728-amino-acid chain: Probable LRR receptor-like serine/threonine-protein kinase At1g14390 (728 aa).

An N-terminal signal peptide occupies residues methionine 1–serine 27. Residues glutamine 28 to leucine 356 are Extracellular-facing. Residues asparagine 55 and asparagine 85 are each glycosylated (N-linked (GlcNAc...) asparagine). LRR repeat units follow at residues asparagine 74–serine 96, leucine 106–leucine 130, serine 131–leucine 155, asparagine 157–leucine 178, serine 179–asparagine 202, isoleucine 204–leucine 224, asparagine 225–leucine 248, proline 249–asparagine 272, and lysine 274–serine 295. Residues asparagine 138 and asparagine 169 are each glycosylated (N-linked (GlcNAc...) asparagine). An N-linked (GlcNAc...) asparagine glycan is attached at asparagine 210. Residues asparagine 253 and asparagine 267 are each glycosylated (N-linked (GlcNAc...) asparagine). The helical transmembrane segment at valine 357–valine 377 threads the bilayer. Residues arginine 378–leucine 728 are Cytoplasmic-facing. Residues threonine 421–isoleucine 709 enclose the Protein kinase domain.

The protein belongs to the protein kinase superfamily. Ser/Thr protein kinase family.

Its subcellular location is the membrane. The enzyme catalyses L-seryl-[protein] + ATP = O-phospho-L-seryl-[protein] + ADP + H(+). The catalysed reaction is L-threonyl-[protein] + ATP = O-phospho-L-threonyl-[protein] + ADP + H(+). The polypeptide is Probable LRR receptor-like serine/threonine-protein kinase At1g14390 (Arabidopsis thaliana (Mouse-ear cress)).